Consider the following 165-residue polypeptide: Glutamyl-tRNA(Gln) amidotransferase subunit F, mitochondrial (165 aa).

Residues 1 to 19 (MKSILRSTTRNLITSSRRF) constitute a mitochondrion transit peptide.

The protein belongs to the GatF family. Subunit of the heterotrimeric GatFAB amidotransferase (AdT) complex, composed of A, B and F subunits.

Its subcellular location is the mitochondrion inner membrane. It catalyses the reaction L-glutamyl-tRNA(Gln) + L-glutamine + ATP + H2O = L-glutaminyl-tRNA(Gln) + L-glutamate + ADP + phosphate + H(+). Its function is as follows. Allows the formation of correctly charged Gln-tRNA(Gln) through the transamidation of misacylated Glu-tRNA(Gln) in the mitochondria. The reaction takes place in the presence of glutamine and ATP through an activated gamma-phospho-Glu-tRNA(Gln). Required for proper protein synthesis within the mitochondrion. The polypeptide is Glutamyl-tRNA(Gln) amidotransferase subunit F, mitochondrial (Candida albicans (strain WO-1) (Yeast)).